A 185-amino-acid polypeptide reads, in one-letter code: Elongation factor P (185 aa).

It belongs to the elongation factor P family.

It localises to the cytoplasm. It functions in the pathway protein biosynthesis; polypeptide chain elongation. In terms of biological role, involved in peptide bond synthesis. Stimulates efficient translation and peptide-bond synthesis on native or reconstituted 70S ribosomes in vitro. Probably functions indirectly by altering the affinity of the ribosome for aminoacyl-tRNA, thus increasing their reactivity as acceptors for peptidyl transferase. This Moorella thermoacetica (strain ATCC 39073 / JCM 9320) protein is Elongation factor P.